A 144-amino-acid polypeptide reads, in one-letter code: F420-non-reducing hydrogenase vhc iron-sulfur subunit D (144 aa).

This sequence belongs to the MvhD/VhuD family. The F420-non-reducing hydrogenase vhc is composed of three subunits; VhcA, VhcD and VhcG. [2Fe-2S] cluster serves as cofactor.

The chain is F420-non-reducing hydrogenase vhc iron-sulfur subunit D (vhcD) from Methanococcus voltae.